Consider the following 354-residue polypeptide: Uroporphyrinogen decarboxylase (354 aa).

Residues 27–31 (RQAGR), Asp77, Tyr154, Thr209, and His327 each bind substrate.

It belongs to the uroporphyrinogen decarboxylase family. In terms of assembly, homodimer.

It is found in the cytoplasm. It catalyses the reaction uroporphyrinogen III + 4 H(+) = coproporphyrinogen III + 4 CO2. It participates in porphyrin-containing compound metabolism; protoporphyrin-IX biosynthesis; coproporphyrinogen-III from 5-aminolevulinate: step 4/4. Functionally, catalyzes the decarboxylation of four acetate groups of uroporphyrinogen-III to yield coproporphyrinogen-III. The polypeptide is Uroporphyrinogen decarboxylase (Salmonella paratyphi B (strain ATCC BAA-1250 / SPB7)).